The chain runs to 410 residues: Polyadenylation and cleavage factor homolog 5 (410 aa).

Residues 1–17 (MASNGSFSAQRNANAGT) show a composition bias toward polar residues. The segment at 1 to 32 (MASNGSFSAQRNANAGTTMKRRNDNRGYGGGI) is disordered. A coiled-coil region spans residues 191-214 (SKELTDLLSLLNNEKEKKTSEASN). The C2H2-type zinc-finger motif lies at 247-269 (RQCTSCGVRFKCQEEHSKHMDWH).

As to quaternary structure, forms a complex with cleavage and polyadenylation specificity factor (CPSF) subunits CSTF77, CLPS3, PCFS4 and PCFS1.

Its subcellular location is the nucleus. In Arabidopsis thaliana (Mouse-ear cress), this protein is Polyadenylation and cleavage factor homolog 5.